The sequence spans 499 residues: Putative sperm motility kinase W (499 aa).

The region spanning 14–262 (YKVLFTLGHG…IEDIERHPWV (249 aa)) is the Protein kinase domain. ATP is bound by residues 20-28 (LGHGSFGTV) and K43. D133 serves as the catalytic Proton acceptor. The 41-residue stretch at 274–314 (DPDYNIIEMLCGMGFDANEILESLQRKKYNESMGAYLILKA) folds into the UBA domain.

Belongs to the protein kinase superfamily. CAMK Ser/Thr protein kinase family. Smok subfamily.

It carries out the reaction L-seryl-[protein] + ATP = O-phospho-L-seryl-[protein] + ADP + H(+). The enzyme catalyses L-threonyl-[protein] + ATP = O-phospho-L-threonyl-[protein] + ADP + H(+). Its function is as follows. May play a role in sperm motility, especially in the regulation of flagellar function. This is Putative sperm motility kinase W from Mus musculus (Mouse).